Consider the following 987-residue polypeptide: Transposase for transposon Tn4430 (987 aa).

Belongs to the transposase 7 family.

Functionally, required for transposition of transposon Tn4430. This Bacillus thuringiensis protein is Transposase for transposon Tn4430 (tnpA).